Here is a 280-residue protein sequence, read N- to C-terminus: Retinoschisin (280 aa).

Positions Met1 to Gln23 are cleaved as a signal peptide. The F5/8 type C domain occupies Cys119–Cys275. 2 disulfides stabilise this stretch: Cys119/Cys275 and Cys166/Cys198.

As to quaternary structure, homooctamer of 4 homodimers; disulfide-linked. The homooctamer has a flat, cogwheel structure with a diameter of about 14 nm. Two stacked octamers can assemble to form a hexadecamer.

Its subcellular location is the secreted. It localises to the cell membrane. Functionally, binds negatively charged membrane lipids, such as phosphatidylserine and phosphoinositides. May play a role in cell-cell adhesion processes in the retina, via homomeric interaction between octamers present on the surface of two neighboring cells. Required for normal structure and function of the retina. This Takifugu rubripes (Japanese pufferfish) protein is Retinoschisin (xlrs1).